Here is a 212-residue protein sequence, read N- to C-terminus: Large ribosomal subunit protein uL3 (212 aa).

Residue Gln-153 is modified to N5-methylglutamine.

This sequence belongs to the universal ribosomal protein uL3 family. Part of the 50S ribosomal subunit. Forms a cluster with proteins L14 and L19. Post-translationally, methylated by PrmB.

Functionally, one of the primary rRNA binding proteins, it binds directly near the 3'-end of the 23S rRNA, where it nucleates assembly of the 50S subunit. The chain is Large ribosomal subunit protein uL3 from Colwellia psychrerythraea (strain 34H / ATCC BAA-681) (Vibrio psychroerythus).